A 172-amino-acid polypeptide reads, in one-letter code: Trypsin inhibitor DE-3 (172 aa).

Intrachain disulfides connect cysteine 39-cysteine 83 and cysteine 132-cysteine 139.

The protein belongs to the protease inhibitor I3 (leguminous Kunitz-type inhibitor) family.

In terms of biological role, inhibition of trypsin. This chain is Trypsin inhibitor DE-3, found in Erythrina caffra (Kaffir tree).